Consider the following 535-residue polypeptide: Glutamate--cysteine ligase (535 aa).

It belongs to the glutamate--cysteine ligase type 1 family. Type 1 subfamily.

It catalyses the reaction L-cysteine + L-glutamate + ATP = gamma-L-glutamyl-L-cysteine + ADP + phosphate + H(+). Its pathway is sulfur metabolism; glutathione biosynthesis; glutathione from L-cysteine and L-glutamate: step 1/2. The polypeptide is Glutamate--cysteine ligase (Pseudomonas syringae pv. syringae (strain B728a)).